The sequence spans 469 residues: Serine hydroxymethyltransferase, cytosolic (469 aa).

Residue lysine 248 is modified to N6-(pyridoxal phosphate)lysine.

The protein belongs to the SHMT family. In terms of assembly, homotetramer. Pyridoxal 5'-phosphate serves as cofactor.

It localises to the cytoplasm. The catalysed reaction is (6R)-5,10-methylene-5,6,7,8-tetrahydrofolate + glycine + H2O = (6S)-5,6,7,8-tetrahydrofolate + L-serine. It participates in one-carbon metabolism; tetrahydrofolate interconversion. Functionally, interconversion of serine and glycine. In Eremothecium gossypii (strain ATCC 10895 / CBS 109.51 / FGSC 9923 / NRRL Y-1056) (Yeast), this protein is Serine hydroxymethyltransferase, cytosolic (SHM2).